Reading from the N-terminus, the 284-residue chain is MKVFILALLALAATTAIAQLETTCSQGFGQSQQQQQPGQRQLLEQMKPCVAFLQQKCSPLRMPFLQTQVEQLSSCQIVQYQCCQQLAQIPERTRCHAIHIVVEAIIQQQSQQQWQEPQQQAQHKSMRMLLENLSLMCNIYVPVQCQQQQQLGQQQQQQLQEQLTPCTTFLQQQCSPVTVPFPQIPVDQPTSCQNVQYQCCRQLSQIPEQFRCQAIHNVAEAIRQQQPQQQWQGMYQPQQPAQLESIRMSLQALRSMCSIYIPVQCPAPTTYNIPLVATYTGGAC.

The signal sequence occupies residues 1 to 18 (MKVFILALLALAATTAIA).

The protein belongs to the prolamin family. In terms of processing, contains disulfide bonds.

Seed storage protein. Might be integrated via inter-chain disulfide bonds within the glutenin polymer. In Triticum aestivum (Wheat), this protein is Avenin-like b9.